The primary structure comprises 195 residues: GTP cyclohydrolase 1 (195 aa).

Zn(2+) contacts are provided by C86, H89, and C158.

Belongs to the GTP cyclohydrolase I family. In terms of assembly, homomer.

It catalyses the reaction GTP + H2O = 7,8-dihydroneopterin 3'-triphosphate + formate + H(+). It participates in cofactor biosynthesis; 7,8-dihydroneopterin triphosphate biosynthesis; 7,8-dihydroneopterin triphosphate from GTP: step 1/1. The sequence is that of GTP cyclohydrolase 1 from Ruminiclostridium cellulolyticum (strain ATCC 35319 / DSM 5812 / JCM 6584 / H10) (Clostridium cellulolyticum).